A 448-amino-acid polypeptide reads, in one-letter code: Phosphoglucosamine mutase (448 aa).

S100 serves as the catalytic Phosphoserine intermediate. Positions 100, 240, 242, and 244 each coordinate Mg(2+). Residue S100 is modified to Phosphoserine.

This sequence belongs to the phosphohexose mutase family. The cofactor is Mg(2+). In terms of processing, activated by phosphorylation.

It catalyses the reaction alpha-D-glucosamine 1-phosphate = D-glucosamine 6-phosphate. In terms of biological role, catalyzes the conversion of glucosamine-6-phosphate to glucosamine-1-phosphate. In Bacillus cereus (strain G9842), this protein is Phosphoglucosamine mutase.